A 551-amino-acid chain; its full sequence is Formate--tetrahydrofolate ligase (551 aa).

An ATP-binding site is contributed by 61–68 (TPAGEGKS).

The protein belongs to the formate--tetrahydrofolate ligase family.

The catalysed reaction is (6S)-5,6,7,8-tetrahydrofolate + formate + ATP = (6R)-10-formyltetrahydrofolate + ADP + phosphate. It participates in one-carbon metabolism; tetrahydrofolate interconversion. This Lactiplantibacillus plantarum (strain ATCC BAA-793 / NCIMB 8826 / WCFS1) (Lactobacillus plantarum) protein is Formate--tetrahydrofolate ligase.